A 243-amino-acid polypeptide reads, in one-letter code: Transcription factor TCP6 (243 aa).

The segment at 1 to 55 (MVMEPKKNQNLPSFLNPSRQNQDNDKKRKQTEVKGFDIVVGEKRKKKENEEEDQE) is disordered. Polar residues predominate over residues 8–21 (NQNLPSFLNPSRQN). The segment covering 22-35 (QDNDKKRKQTEVKG) has biased composition (basic and acidic residues). Residues 42–66 (EKRKKKENEEEDQEIQILYEKEKKK) adopt a coiled-coil conformation. One can recognise a TCP domain in the interval 68 to 122 (NKDRHLKVEGRGRRVRLPPLCAARIYQLTKELGHKSDGETLEWLLQHAEPSILSA).

In terms of assembly, interacts with SPL.

It is found in the nucleus. The sequence is that of Transcription factor TCP6 (TCP6) from Arabidopsis thaliana (Mouse-ear cress).